A 398-amino-acid chain; its full sequence is Nematocin receptor 2 (398 aa).

Residues 1–25 (MNNNTLNITNQRTAAAMSQIYFLVV) are Extracellular-facing. N-linked (GlcNAc...) asparagine glycans are attached at residues Asn3 and Asn7. Residues 26–46 (YQTAVMIVSLLGNLFLLFVIF) traverse the membrane as a helical segment. Residues 47-58 (RANQVMKRRVSP) are Cytoplasmic-facing. A helical transmembrane segment spans residues 59 to 79 (VQLLIIHTCVADLLFALLSLG). Residues 80 to 99 (TEILTLRTYPQYYGSNFVCK) are Extracellular-facing. Cys98 and Cys173 form a disulfide bridge. A helical transmembrane segment spans residues 100-120 (LMRYVQMFPMYASPFLLVAIS). At 121-143 (ADRYQAICRPLAHFRSSRYRRPN) the chain is on the cytoplasmic side. Residues 144 to 164 (WMAAIAWGLALVLSIPQFFVW) form a helical membrane-spanning segment. At 165–187 (TKHSKTGRCSTIYGQNKNTVKIT) the chain is on the extracellular side. The chain crosses the membrane as a helical span at residues 188 to 208 (YVIMFNTLAWLLPSILAAVFY). The Cytoplasmic portion of the chain corresponds to 209 to 271 (YCVCKAVRLS…DRKRVQTVRL (63 aa)). Residues 272 to 292 (TITIVACNFFLWMPFCLINVI) traverse the membrane as a helical segment. Over 293–302 (QALWPEISHI) the chain is Extracellular. Residues 303–325 (MFINYVAILGNLNSCLNPWIYIL) traverse the membrane as a helical segment. At 326 to 398 (FNRSHVRKAL…DSTSLKTNSN (73 aa)) the chain is on the cytoplasmic side.

It belongs to the G-protein coupled receptor 1 family. Vasopressin/oxytocin receptor subfamily. As to expression, detected in the ADL sensory neurons, the RMED and RMEV motor neurons, and the PQR tail neuron. In males, detected in SPC tail neurons involved in spicule penetration and sperm transfer, and male-specific oblique muscles involved in vulval contact.

It localises to the cell membrane. Functionally, not directly activated by nematocin. May modulate activity of the nematocin receptor ntr-1, leading to reduced intracellular cAMP production. Plays a role in male mating behavior. This Caenorhabditis elegans protein is Nematocin receptor 2.